We begin with the raw amino-acid sequence, 115 residues long: Tyrosine-protein phosphatase 23 (115 aa).

The 115-residue stretch at 1 to 115 (WMMIVEQKCR…EIGGDAPMVV (115 aa)) folds into the Tyrosine-protein phosphatase domain. A substrate-binding site is contributed by D83.

This sequence belongs to the protein-tyrosine phosphatase family.

The catalysed reaction is O-phospho-L-tyrosyl-[protein] + H2O = L-tyrosyl-[protein] + phosphate. The chain is Tyrosine-protein phosphatase 23 (STY-23) from Styela plicata (Wrinkled sea squirt).